The sequence spans 299 residues: MNEFDRVRDYLTDLQDRICAAVEAIDGKARFAEDLWQRAEGGGGRTRILRDGAVFEQAGIGFSDVSGARLPPSASAHRPELAGATWRACGVSLVFHPHNPHIPTTHANVRYFRAERDGEMVAAWFGGGFDLTPFYPVDEDVMHWHRTAQALCAPFGEERYAAHKRWCDEYFFLRHRDETRGVGGLFFDDLGQDFERDFAYQRAVGDGFLDAYLPIVERRKDTPYGEAERAFQLYRRGRYVEFNLVYDRGTLFGLQSGGRAESILMSLPPQVRWEYGFQPQPGSAEARLADYLIPRDWLG.

Ser-92 is a substrate binding site. 2 residues coordinate a divalent metal cation: His-96 and His-106. His-106 acts as the Proton donor in catalysis. 108–110 (NVR) serves as a coordination point for substrate. A divalent metal cation-binding residues include His-145 and His-175. An important for dimerization region spans residues 239–274 (YVEFNLVYDRGTLFGLQSGGRAESILMSLPPQVRWE). 257–259 (GGR) provides a ligand contact to substrate.

The protein belongs to the aerobic coproporphyrinogen-III oxidase family. In terms of assembly, homodimer. A divalent metal cation is required as a cofactor.

The protein resides in the cytoplasm. It carries out the reaction coproporphyrinogen III + O2 + 2 H(+) = protoporphyrinogen IX + 2 CO2 + 2 H2O. It participates in porphyrin-containing compound metabolism; protoporphyrin-IX biosynthesis; protoporphyrinogen-IX from coproporphyrinogen-III (O2 route): step 1/1. Involved in the heme biosynthesis. Catalyzes the aerobic oxidative decarboxylation of propionate groups of rings A and B of coproporphyrinogen-III to yield the vinyl groups in protoporphyrinogen-IX. The chain is Oxygen-dependent coproporphyrinogen-III oxidase from Xanthomonas campestris pv. campestris (strain B100).